We begin with the raw amino-acid sequence, 173 residues long: Alpha-crystallin A chain (173 aa).

At Met1 the chain carries N-acetylmethionine. Residues 1–63 (MDIAIQHPWF…RTVLDSGISE (63 aa)) form a required for complex formation with BFSP1 and BFSP2 region. Gln6 bears the Deamidated glutamine; partial mark. Lys11 is a glycosylation site (N-linked (Glc) (glycation) lysine). Ser45 is subject to Phosphoserine. Gln50 carries the post-translational modification Deamidated glutamine; partial. Positions 52–162 (LFRTVLDSGI…GHSERAIPVS (111 aa)) constitute a sHSP domain. Lys70 is modified (N6-acetyllysine). An N-linked (Glc) (glycation) lysine glycan is attached at Lys78. A Deamidated glutamine; partial modification is found at Gln90. The residue at position 99 (Lys99) is an N6-acetyllysine. His100 serves as a coordination point for Zn(2+). Asn101 bears the Deamidated asparagine; partial mark. Residues Glu102 and His107 each contribute to the Zn(2+) site. Position 122 is a phosphoserine (Ser122). Asn123 carries the post-translational modification Deamidated asparagine; partial. Residues 144 to 173 (PKIPSGVDAGHSERAIPVSREEKPSSAPSS) form a disordered region. Over residues 153 to 167 (GHSERAIPVSREEKP) the composition is skewed to basic and acidic residues. His154 is a binding site for Zn(2+). The segment at 157–163 (RAIPVSR) is important for oligomerization. Residue Ser162 is glycosylated (O-linked (GlcNAc) serine).

It belongs to the small heat shock protein (HSP20) family. As to quaternary structure, heteromer composed of three CRYAA and one CRYAB subunits. Inter-subunit bridging via zinc ions enhances stability, which is crucial as there is no protein turn over in the lens. Can also form homodimers and homotetramers (dimers of dimers) which serve as the building blocks of homooligomers. Within homooligomers, the zinc-binding motif is created from residues of 3 different molecules. His-100 and Glu-102 from one molecule are ligands of the zinc ion, and His-107 and His-154 residues from additional molecules complete the site with tetrahedral coordination geometry. Part of a complex required for lens intermediate filament formation composed of BFSP1, BFSP2 and CRYAA. Post-translationally, acetylation at Lys-70 may increase chaperone activity. In terms of processing, undergoes age-dependent proteolytical cleavage at the C-terminus.

Its subcellular location is the cytoplasm. It is found in the nucleus. Contributes to the transparency and refractive index of the lens. Acts as a chaperone, preventing aggregation of various proteins under a wide range of stress conditions. Required for the correct formation of lens intermediate filaments as part of a complex composed of BFSP1, BFSP2 and CRYAA. In Bos taurus (Bovine), this protein is Alpha-crystallin A chain (CRYAA).